Here is a 287-residue protein sequence, read N- to C-terminus: Polyamine aminopropyltransferase (287 aa).

The PABS domain occupies 5-238 (EIWYETLHAN…GIMTFAWASQ (234 aa)). Glutamine 33 is a binding site for S-methyl-5'-thioadenosine. Positions 64 and 88 each coordinate spermidine. Residues glutamate 108 and 140 to 141 (DG) contribute to the S-methyl-5'-thioadenosine site. The active-site Proton acceptor is aspartate 158. 158-161 (DCTD) provides a ligand contact to spermidine. An S-methyl-5'-thioadenosine-binding site is contributed by proline 165.

It belongs to the spermidine/spermine synthase family. In terms of assembly, homodimer or homotetramer.

Its subcellular location is the cytoplasm. The catalysed reaction is S-adenosyl 3-(methylsulfanyl)propylamine + putrescine = S-methyl-5'-thioadenosine + spermidine + H(+). The protein operates within amine and polyamine biosynthesis; spermidine biosynthesis; spermidine from putrescine: step 1/1. Functionally, catalyzes the irreversible transfer of a propylamine group from the amino donor S-adenosylmethioninamine (decarboxy-AdoMet) to putrescine (1,4-diaminobutane) to yield spermidine. The protein is Polyamine aminopropyltransferase of Serratia proteamaculans (strain 568).